Consider the following 82-residue polypeptide: Small ribosomal subunit protein uS17 (82 aa).

This sequence belongs to the universal ribosomal protein uS17 family. Part of the 30S ribosomal subunit.

In terms of biological role, one of the primary rRNA binding proteins, it binds specifically to the 5'-end of 16S ribosomal RNA. In Bradyrhizobium diazoefficiens (strain JCM 10833 / BCRC 13528 / IAM 13628 / NBRC 14792 / USDA 110), this protein is Small ribosomal subunit protein uS17.